The primary structure comprises 492 residues: N-succinylglutamate 5-semialdehyde dehydrogenase (492 aa).

220–225 (GRANTG) serves as a coordination point for NAD(+). Active-site residues include Glu-243 and Cys-277.

The protein belongs to the aldehyde dehydrogenase family. AstD subfamily.

The enzyme catalyses N-succinyl-L-glutamate 5-semialdehyde + NAD(+) + H2O = N-succinyl-L-glutamate + NADH + 2 H(+). It participates in amino-acid degradation; L-arginine degradation via AST pathway; L-glutamate and succinate from L-arginine: step 4/5. Its function is as follows. Catalyzes the NAD-dependent reduction of succinylglutamate semialdehyde into succinylglutamate. This Shigella boydii serotype 4 (strain Sb227) protein is N-succinylglutamate 5-semialdehyde dehydrogenase.